We begin with the raw amino-acid sequence, 308 residues long: tRNA pseudouridine synthase B (308 aa).

D47 functions as the Nucleophile in the catalytic mechanism.

It belongs to the pseudouridine synthase TruB family. Type 1 subfamily.

It carries out the reaction uridine(55) in tRNA = pseudouridine(55) in tRNA. Responsible for synthesis of pseudouridine from uracil-55 in the psi GC loop of transfer RNAs. This Xanthomonas oryzae pv. oryzae (strain MAFF 311018) protein is tRNA pseudouridine synthase B.